A 204-amino-acid chain; its full sequence is dTTP/UTP pyrophosphatase (204 aa).

The active-site Proton acceptor is the Asp68.

Belongs to the Maf family. YhdE subfamily. A divalent metal cation is required as a cofactor.

The protein localises to the cytoplasm. The catalysed reaction is dTTP + H2O = dTMP + diphosphate + H(+). The enzyme catalyses UTP + H2O = UMP + diphosphate + H(+). In terms of biological role, nucleoside triphosphate pyrophosphatase that hydrolyzes dTTP and UTP. May have a dual role in cell division arrest and in preventing the incorporation of modified nucleotides into cellular nucleic acids. This Thermotoga maritima (strain ATCC 43589 / DSM 3109 / JCM 10099 / NBRC 100826 / MSB8) protein is dTTP/UTP pyrophosphatase.